We begin with the raw amino-acid sequence, 591 residues long: Aspartate--tRNA ligase (591 aa).

An L-aspartate-binding site is contributed by Glu-171. Positions 195-198 (QLFK) are aspartate. Position 217 (Arg-217) interacts with L-aspartate. ATP is bound by residues 217-219 (RDE) and Gln-226. L-aspartate is bound at residue His-448. Glu-482 contributes to the ATP binding site. Arg-489 contacts L-aspartate. ATP is bound at residue 534–537 (GLDR).

Belongs to the class-II aminoacyl-tRNA synthetase family. Type 1 subfamily. Homodimer.

Its subcellular location is the cytoplasm. The enzyme catalyses tRNA(Asp) + L-aspartate + ATP = L-aspartyl-tRNA(Asp) + AMP + diphosphate. Functionally, catalyzes the attachment of L-aspartate to tRNA(Asp) in a two-step reaction: L-aspartate is first activated by ATP to form Asp-AMP and then transferred to the acceptor end of tRNA(Asp). This is Aspartate--tRNA ligase from Aliivibrio salmonicida (strain LFI1238) (Vibrio salmonicida (strain LFI1238)).